The following is a 319-amino-acid chain: MVLGSAALFVLSLCVTELTLHAADTCPEVKVLDLEGSNKLTILQGCPGLPGALGPKGEAGAKGDRGESGLPGHPGKAGPTGPKGDRGEKGVRGEKGDTGPSQSCATGPRTCKELLTRGYFLTGWYTIYLPDCRPLTVLCDMDTDGGGWTVFQRRIDGTVDFFRDWTSYKQGFGSQLGEFWLGNDNIHALTTQGTNELRVDLADFDGNHDFAKYSSFQIQGEAEKYKLILGNFLGGGAGDSLTSQNNMLFSTKDQDNDQGSSNCAVRYHGAWWYSDCHTSNLNGLYLRGLHKSYANGVNWKSWKGYNYSYKVSEMKVRLI.

The N-terminal stretch at 1–22 (MVLGSAALFVLSLCVTELTLHA) is a signal peptide. One can recognise a Collagen-like domain in the interval 45–101 (GCPGLPGALGPKGEAGAKGDRGESGLPGHPGKAGPTGPKGDRGEKGVRGEKGDTGPS). Residues 53–106 (LGPKGEAGAKGDRGESGLPGHPGKAGPTGPKGDRGEKGVRGEKGDTGPSQSCAT) are disordered. Over residues 83–97 (KGDRGEKGVRGEKGD) the composition is skewed to basic and acidic residues. One can recognise a Fibrinogen C-terminal domain in the interval 102-319 (QSCATGPRTC…KVSEMKVRLI (218 aa)). 2 disulfides stabilise this stretch: C104-C132 and C111-C139. Ca(2+) is bound by residues D255, D257, and S261. The cysteines at positions 263 and 276 are disulfide-linked. N306 is a glycosylation site (N-linked (GlcNAc...) asparagine).

The protein belongs to the ficolin lectin family. In terms of assembly, homotrimer. Interacts with elastin. Interacts with MASP1 and MASP2.

The protein resides in the secreted. In terms of biological role, may function in innate immunity through activation of the lectin complement pathway. Calcium-dependent and GlcNAc-binding lectin. This is Ficolin-2 (Fcn2) from Rattus norvegicus (Rat).